The chain runs to 84 residues: Cytochrome b559 subunit alpha (84 aa).

A helical transmembrane segment spans residues 21–35 (VIHSITIPSLFIAGW). Position 23 (H23) interacts with heme.

It belongs to the PsbE/PsbF family. Heterodimer of an alpha subunit and a beta subunit. PSII is composed of 1 copy each of membrane proteins PsbA, PsbB, PsbC, PsbD, PsbE, PsbF, PsbH, PsbI, PsbJ, PsbK, PsbL, PsbM, PsbT, PsbX, PsbY, PsbZ, Psb30/Ycf12, at least 3 peripheral proteins of the oxygen-evolving complex and a large number of cofactors. It forms dimeric complexes. The cofactor is heme b.

It localises to the plastid membrane. This b-type cytochrome is tightly associated with the reaction center of photosystem II (PSII). PSII is a light-driven water:plastoquinone oxidoreductase that uses light energy to abstract electrons from H(2)O, generating O(2) and a proton gradient subsequently used for ATP formation. It consists of a core antenna complex that captures photons, and an electron transfer chain that converts photonic excitation into a charge separation. This is Cytochrome b559 subunit alpha from Cuscuta gronovii (Common dodder).